The sequence spans 570 residues: Formate--tetrahydrofolate ligase (570 aa).

Position 65–72 (65–72 (TPHGEGKT)) interacts with ATP.

This sequence belongs to the formate--tetrahydrofolate ligase family.

It catalyses the reaction (6S)-5,6,7,8-tetrahydrofolate + formate + ATP = (6R)-10-formyltetrahydrofolate + ADP + phosphate. Its pathway is one-carbon metabolism; tetrahydrofolate interconversion. The sequence is that of Formate--tetrahydrofolate ligase from Shewanella oneidensis (strain ATCC 700550 / JCM 31522 / CIP 106686 / LMG 19005 / NCIMB 14063 / MR-1).